The sequence spans 476 residues: Bifunctional protein HldE (476 aa).

A ribokinase region spans residues 1–319; sequence MKVSLPAFEK…EALALHHGES (319 aa). Residue 195–198 coordinates ATP; the sequence is NMSE. Asp264 is an active-site residue. The cytidylyltransferase stretch occupies residues 345–476; sequence MTNGCFDILH…AIIQNIMANQ (132 aa).

It in the N-terminal section; belongs to the carbohydrate kinase PfkB family. This sequence in the C-terminal section; belongs to the cytidylyltransferase family. Homodimer.

It carries out the reaction D-glycero-beta-D-manno-heptose 7-phosphate + ATP = D-glycero-beta-D-manno-heptose 1,7-bisphosphate + ADP + H(+). The catalysed reaction is D-glycero-beta-D-manno-heptose 1-phosphate + ATP + H(+) = ADP-D-glycero-beta-D-manno-heptose + diphosphate. It participates in nucleotide-sugar biosynthesis; ADP-L-glycero-beta-D-manno-heptose biosynthesis; ADP-L-glycero-beta-D-manno-heptose from D-glycero-beta-D-manno-heptose 7-phosphate: step 1/4. It functions in the pathway nucleotide-sugar biosynthesis; ADP-L-glycero-beta-D-manno-heptose biosynthesis; ADP-L-glycero-beta-D-manno-heptose from D-glycero-beta-D-manno-heptose 7-phosphate: step 3/4. Functionally, catalyzes the phosphorylation of D-glycero-D-manno-heptose 7-phosphate at the C-1 position to selectively form D-glycero-beta-D-manno-heptose-1,7-bisphosphate. Its function is as follows. Catalyzes the ADP transfer from ATP to D-glycero-beta-D-manno-heptose 1-phosphate, yielding ADP-D-glycero-beta-D-manno-heptose. The sequence is that of Bifunctional protein HldE from Shewanella baltica (strain OS155 / ATCC BAA-1091).